The chain runs to 124 residues: Small ribosomal subunit protein eS8 (124 aa).

Residues 1 to 22 (MQYQGRSKRSKTGARLRPRSKK) are compositionally biased toward basic residues. 2 disordered regions span residues 1 to 40 (MQYQ…GEPR) and 102 to 124 (AGTA…RVDE). A compositionally biased stretch (basic and acidic residues) spans 23-32 (SKSELGREPT). Residues 106–124 (RVTSRPGQDGQVNATRVDE) are compositionally biased toward polar residues.

It belongs to the eukaryotic ribosomal protein eS8 family. Part of the 30S ribosomal subunit.

The protein is Small ribosomal subunit protein eS8 of Halobacterium salinarum (strain ATCC 29341 / DSM 671 / R1).